We begin with the raw amino-acid sequence, 62 residues long: Large ribosomal subunit protein bL28 (62 aa).

The protein belongs to the bacterial ribosomal protein bL28 family.

This Thermoanaerobacter pseudethanolicus (strain ATCC 33223 / 39E) (Clostridium thermohydrosulfuricum) protein is Large ribosomal subunit protein bL28.